Consider the following 75-residue polypeptide: Beta-defensin 30 (75 aa).

The signal sequence occupies residues 1–22 (MGSLQLILVLFVLLSDVPPVRS). Cystine bridges form between C35/C62, C42/C56, and C46/C63.

This sequence belongs to the beta-defensin family.

It is found in the secreted. Has antibacterial activity. The sequence is that of Beta-defensin 30 (Defb30) from Rattus norvegicus (Rat).